The primary structure comprises 259 residues: Indole-3-glycerol phosphate synthase (259 aa).

This sequence belongs to the TrpC family.

It catalyses the reaction 1-(2-carboxyphenylamino)-1-deoxy-D-ribulose 5-phosphate + H(+) = (1S,2R)-1-C-(indol-3-yl)glycerol 3-phosphate + CO2 + H2O. The protein operates within amino-acid biosynthesis; L-tryptophan biosynthesis; L-tryptophan from chorismate: step 4/5. This Dehalococcoides mccartyi (strain ATCC BAA-2266 / KCTC 15142 / 195) (Dehalococcoides ethenogenes (strain 195)) protein is Indole-3-glycerol phosphate synthase.